A 211-amino-acid chain; its full sequence is Protein-L-isoaspartate O-methyltransferase (211 aa).

The active site involves serine 60.

It belongs to the methyltransferase superfamily. L-isoaspartyl/D-aspartyl protein methyltransferase family.

The protein localises to the cytoplasm. The catalysed reaction is [protein]-L-isoaspartate + S-adenosyl-L-methionine = [protein]-L-isoaspartate alpha-methyl ester + S-adenosyl-L-homocysteine. In terms of biological role, catalyzes the methyl esterification of L-isoaspartyl residues in peptides and proteins that result from spontaneous decomposition of normal L-aspartyl and L-asparaginyl residues. It plays a role in the repair and/or degradation of damaged proteins. The polypeptide is Protein-L-isoaspartate O-methyltransferase (Pseudomonas fluorescens (strain Pf0-1)).